An 89-amino-acid chain; its full sequence is Large ribosomal subunit protein bL31B (89 aa).

Residues 70 to 89 form a disordered region; that stretch reads RVQRFESRRRRRQQQSGEQG.

It belongs to the bacterial ribosomal protein bL31 family. Type B subfamily. As to quaternary structure, part of the 50S ribosomal subunit.

The chain is Large ribosomal subunit protein bL31B from Rubrobacter xylanophilus (strain DSM 9941 / JCM 11954 / NBRC 16129 / PRD-1).